Reading from the N-terminus, the 99-residue chain is uncharacterized protein (99 aa).

Positions 1–17 (MMMNAFFPAMALIVLVG) are cleaved as a signal peptide. A lipid anchor (N-palmitoyl cysteine) is attached at Cys-18. A lipid anchor (S-diacylglycerol cysteine) is attached at Cys-18.

The protein resides in the cell membrane. This is an uncharacterized protein from Escherichia coli O6:H1 (strain CFT073 / ATCC 700928 / UPEC).